The chain runs to 340 residues: MAIGSVVFAAAGLLLLLLPPSHQQATAGNIGSQWRDDEVHFNRTLDSILVPRVVGSRGHQQVREYLVQSLNGLGFQTEVDEFKQRVPVFGELTFANVVGTINPQAQNFLALACHYDSKYFPNDPGFVGATDSAVPCAILLNTAKTLGAYLQKEFRNRSDVGLMLIFFDGEEAFKEWTDADSVYGSKHLAAKLASKRSGSQAQLAPRNIDRIEVLVLLDLIGARNPKFSSFYENTDGLHSSLVQIEKSLRTAGQLEGNNNMFLSRVSGGLVDDDHRPFLDENVPVLHLVATPFPDVWHTPRDNAANLHWPSIRNFNRVFRNFVYQYLKRHTSPVNLRFYRT.

Residues 1–23 form the signal peptide; the sequence is MAIGSVVFAAAGLLLLLLPPSHQ. A glycan (N-linked (GlcNAc...) asparagine) is linked at asparagine 42. Alpha-D-mannopyranose contacts are provided by arginine 85 and glutamate 91. A disulfide bridge links cysteine 113 with cysteine 136. Zn(2+) is bound at residue aspartate 131. Positions 151 and 155 each coordinate alpha-D-mannopyranose. An N-linked (GlcNAc...) asparagine glycan is attached at asparagine 156. The Proton acceptor role is filled by glutamate 170. A Zn(2+)-binding site is contributed by glutamate 171. Aspartate 218 functions as the Proton acceptor in the catalytic mechanism. Residue histidine 297 coordinates Zn(2+). Alpha-D-mannopyranose is bound at residue leucine 306.

This sequence belongs to the glutaminyl-peptide cyclotransferase family.

The protein localises to the secreted. The enzyme catalyses N-terminal L-glutaminyl-[peptide] = N-terminal 5-oxo-L-prolyl-[peptide] + NH4(+). With respect to regulation, inhibited by imidazoles (imidazole, benzimidazole, 1-benzylimidazole, 1-methylimidazole, P150/03, N-omega-acetylhistamine and 4-methylimidazole) and cysteamines (cysteamine, N-dimethylcysteamine and N-diethylcysteamine). Partially inhibited by PDB50 1(3,4-dimethoxyphenyl)-3-(3-imidazol-1-ylpropyl)thiourea. Acts as a glutaminyl-peptide cyclotransferase. Responsible for the biosynthesis of pyroglutamyl peptides. Might be more efficient in the conversion of tri and tetrapeptides in vitro. Might have a relative preference for substrates containing hydrophobic amino acids in vitro. This is Glutaminyl-peptide cyclotransferase from Drosophila melanogaster (Fruit fly).